The sequence spans 1488 residues: Calmodulin binding protein PICBP (1488 aa).

Disordered regions lie at residues 1 to 31 (MSNPMFPEKWEESSTSKSSRRVHKRRERKMW), 63 to 112 (TAES…SRIS), 280 to 329 (GPLG…GRSS), and 378 to 414 (HDHDDGKVDGTTSDGTVGDNEEVCREGSSGELREEDG). The span at 18–31 (SSRRVHKRRERKMW) shows a compositional bias: basic residues. The segment covering 76-86 (DDSRTYSKSSD) has biased composition (basic and acidic residues). A compositionally biased stretch (basic residues) spans 98–107 (SVKRRAKSKS). Over residues 297 to 312 (DNVDGDSDEEVFEEEV) the composition is skewed to acidic residues. 2 calmodulin-binding regions span residues 493-592 (TFHM…SLIP) and 831-938 (NSLK…DIVL). Disordered stretches follow at residues 816–844 (IPDSSSDEESVSESSNSLKEEKEHQGETK) and 941–971 (HDTPKQTKNSDTPRNNDETKEGKPRVEEGCE). Composition is skewed to basic and acidic residues over residues 833-844 (LKEEKEHQGETK) and 954-971 (RNNDETKEGKPRVEEGCE). Residues 1135-1229 (EKRVKGWNNV…SLLAQAFDTI (95 aa)) form a calmodulin-binding region. Disordered stretches follow at residues 1232–1252 (QDMGSGSTPGSAASSRNISRQ) and 1316–1340 (EKNQTLPEETRKEEEEEELKEDTSV). Residues 1235–1252 (GSGSTPGSAASSRNISRQ) show a composition bias toward low complexity. A compositionally biased stretch (basic and acidic residues) spans 1316-1328 (EKNQTLPEETRKE). The interval 1379–1483 (RQKSETLQVS…QLLVQAFESL (105 aa)) is calmodulin-binding.

In terms of biological role, binds calmodulin in a calcium-dependent manner in vitro. May play a role in general plant defense including R gene-mediated responses. This Arabidopsis thaliana (Mouse-ear cress) protein is Calmodulin binding protein PICBP.